The following is a 921-amino-acid chain: AdoMet-dependent rRNA methyltransferase SPB1 (921 aa).

Positions 58, 60, 78, 94, and 119 each coordinate S-adenosyl-L-methionine. Lys-159 acts as the Proton acceptor in catalysis. A coiled-coil region spans residues Val-367–Thr-414. Disordered regions lie at residues Ala-448–Thr-476, Glu-491–Leu-604, Glu-635–Lys-713, Leu-814–Lys-835, and Arg-866–Asn-921. A compositionally biased stretch (basic and acidic residues) spans Glu-491–Lys-522. 4 stretches are compositionally biased toward acidic residues: residues Asp-523–Gly-542, Glu-555–Glu-568, Glu-635–Glu-684, and Asp-697–Glu-708. The stretch at Ile-796–Lys-835 forms a coiled coil. The segment covering Leu-814 to Thr-823 has biased composition (basic and acidic residues). Over residues Leu-868–Tyr-879 the composition is skewed to basic residues. Over residues Lys-880–Ala-892 the composition is skewed to basic and acidic residues.

It belongs to the class I-like SAM-binding methyltransferase superfamily. RNA methyltransferase RlmE family. SPB1 subfamily. As to quaternary structure, component of the nucleolar and nucleoplasmic pre-60S ribosomal particle.

Its subcellular location is the nucleus. It is found in the nucleolus. It catalyses the reaction a ribonucleotide in rRNA + S-adenosyl-L-methionine = a 2'-O-methylribonucleotide in rRNA + S-adenosyl-L-homocysteine + H(+). Functionally, required for proper assembly of pre-ribosomal particles during the biogenesis of the 60S ribosomal subunit. The polypeptide is AdoMet-dependent rRNA methyltransferase SPB1 (Mycosarcoma maydis (Corn smut fungus)).